The sequence spans 275 residues: NAC domain-containing protein 2 (275 aa).

Residues 10-162 (LPPGFRFHPT…DWVLCRIYKK (153 aa)) enclose the NAC domain. Residues 107 to 168 (VGIKKALVFY…IYKKKNLERA (62 aa)) mediate DNA binding.

Expressed in roots, stem, flowers, and leaves.

The protein localises to the nucleus. Functionally, transcription factor that binds DNA motifs 5'-CGT[AG](5N)NACG[ACT][AC][AT][ACG][ACT]-3' and 5'-CACG[ACT][AC][AT][AGT][CT]-3' in target genes promoters. Promotes leaf senescence (developmental, light-induced and ABA-induced senescence) and regulates fruit yield and sugar content, probably by establishing abscisic acid (ABA) homeostasis. Activates the expression of senescence and ABA associated genes including NCED1, ABCG40, CYP707A2, SAG113, SGR1 and PAO, by directly binding to their promoters. The chain is NAC domain-containing protein 2 from Solanum lycopersicum (Tomato).